The chain runs to 154 residues: Superoxide dismutase [Cu-Zn] (154 aa).

Lys-19 participates in a covalent cross-link: Glycyl lysine isopeptide (Lys-Gly) (interchain with G-Cter in SUMO). Ser-26 and Ser-39 each carry phosphoserine. Position 43 (Glu-43) interacts with Zn(2+). Cu cation contacts are provided by His-47, His-49, and His-64. Cys-58 and Cys-147 are oxidised to a cystine. His-64 contributes to the Zn(2+) binding site. Lys-70 is covalently cross-linked (Glycyl lysine isopeptide (Lys-Gly) (interchain with G-Cter in SUMO)). Residues His-72, His-81, and Asp-84 each contribute to the Zn(2+) site. Ser-99 and Ser-117 each carry phosphoserine. His-121 lines the Cu cation pocket. Phosphothreonine occurs at positions 132 and 138. Arg-144 contributes to the substrate binding site.

The protein belongs to the Cu-Zn superoxide dismutase family. As to quaternary structure, homodimer in holo form. In apo form, heterodimer with CCS1. Zinc-binding at 'His-16' of CCS1 and Glu-43 of apo-SOD1 is required for this heterodimerization. Cu cation serves as cofactor. Requires Zn(2+) as cofactor.

Its subcellular location is the cytoplasm. The protein localises to the mitochondrion intermembrane space. It carries out the reaction 2 superoxide + 2 H(+) = H2O2 + O2. In terms of biological role, destroys radicals which are normally produced within the cells and which are toxic to biological systems. The chain is Superoxide dismutase [Cu-Zn] from Saccharomyces cerevisiae (strain ATCC 204508 / S288c) (Baker's yeast).